Consider the following 483-residue polypeptide: Probable glycine dehydrogenase (decarboxylating) subunit 2 (483 aa).

The segment at 1 to 24 is disordered; the sequence is MLIFDHSRPGRTAAAQLPATGGDL. Lys-264 is modified (N6-(pyridoxal phosphate)lysine).

The protein belongs to the GcvP family. C-terminal subunit subfamily. The glycine cleavage system is composed of four proteins: P, T, L and H. In this organism, the P 'protein' is a heterodimer of two subunits. It depends on pyridoxal 5'-phosphate as a cofactor.

The catalysed reaction is N(6)-[(R)-lipoyl]-L-lysyl-[glycine-cleavage complex H protein] + glycine + H(+) = N(6)-[(R)-S(8)-aminomethyldihydrolipoyl]-L-lysyl-[glycine-cleavage complex H protein] + CO2. Its function is as follows. The glycine cleavage system catalyzes the degradation of glycine. The P protein binds the alpha-amino group of glycine through its pyridoxal phosphate cofactor; CO(2) is released and the remaining methylamine moiety is then transferred to the lipoamide cofactor of the H protein. The sequence is that of Probable glycine dehydrogenase (decarboxylating) subunit 2 from Thiobacillus denitrificans (strain ATCC 25259 / T1).